Consider the following 487-residue polypeptide: UPF0276 protein SAV_2218 (487 aa).

Positions 1–285 (MVEEGTMERL…LGAIRKTLEK (285 aa)) are UPF0276. Residues 286–487 (AGTRAGASAG…RATRRVLLRR (202 aa)) form a unknown region. The tract at residues 319 to 348 (AGPRRGGADAQAAPRAAGTEALSAASTSTP) is disordered. Low complexity predominate over residues 326-348 (ADAQAAPRAAGTEALSAASTSTP).

In the N-terminal section; belongs to the UPF0276 family.

The chain is UPF0276 protein SAV_2218 from Streptomyces avermitilis (strain ATCC 31267 / DSM 46492 / JCM 5070 / NBRC 14893 / NCIMB 12804 / NRRL 8165 / MA-4680).